The following is a 329-amino-acid chain: Protein-arginine N-acetylglucosaminyltransferase NleB1 (329 aa).

A glycan (N-beta-linked (GlcNAc) arginine; by autocatalysis) is linked at arginine 13. UDP-N-acetyl-alpha-D-glucosamine is bound at residue 48–50; it reads QWF. The N-beta-linked (GlcNAc) arginine; by autocatalysis glycan is linked to arginine 53. A UDP-N-acetyl-alpha-D-glucosamine-binding site is contributed by tyrosine 72. N-beta-linked (GlcNAc) arginine; by autocatalysis glycosylation is present at arginine 159. 219-222 contacts UDP-N-acetyl-alpha-D-glucosamine; that stretch reads YLDA. The short motif at 221 to 223 is the DXD motif element; the sequence is DAD. Aspartate 223 serves as a coordination point for Mn(2+). The active-site Proton acceptor is glutamate 253. The N-beta-linked (GlcNAc) arginine; by autocatalysis glycan is linked to arginine 293. Mn(2+) is bound by residues asparagine 320 and serine 322. UDP-N-acetyl-alpha-D-glucosamine is bound by residues serine 322 and 327 to 329; that span reads SSW.

Belongs to the glycosyltransferase NleB family. Mn(2+) is required as a cofactor. Auto-glycosylated: arginine GlcNAcylation is required for activity toward death domain-containing host target proteins.

Its subcellular location is the secreted. It localises to the host cytoplasm. The enzyme catalyses L-arginyl-[protein] + UDP-N-acetyl-alpha-D-glucosamine = N(omega)-(N-acetyl-beta-D-glucosaminyl)-L-arginyl-[protein] + UDP + H(+). Protein-arginine N-acetylglucosaminyltransferase activity is inhibited by 100066N compound (flavone analog) and 102644N compound (a substituted isoxazole). In terms of biological role, protein-arginine N-acetylglucosaminyltransferase effector that disrupts TNF signaling in infected cells, including NF-kappa-B signaling, apoptosis and necroptosis. Acts by catalyzing the transfer of a single N-acetylglucosamine (GlcNAc) to a conserved arginine residue in the death domain of host proteins such as FADD: arginine GlcNAcylation prevents homotypic/heterotypic death domain interactions and assembly of the oligomeric TNF-alpha receptor complex, thereby disrupting TNF signaling. Also acts on host proteins without a death domain: catalyzes arginine GlcNAcylation of host GAPDH protein, thereby preventing GAPDH interaction with TRAF2, leading to inhibit NF-kappa-B signaling. Catalyzes auto-GlcNAcylation, which is required for activity toward death domain-containing host target proteins. The chain is Protein-arginine N-acetylglucosaminyltransferase NleB1 from Escherichia coli O157:H7.